Here is a 305-residue protein sequence, read N- to C-terminus: Glutaminase (305 aa).

Substrate contacts are provided by S61, N113, E158, N165, Y189, Y241, and V259.

Belongs to the glutaminase family. Homotetramer.

The catalysed reaction is L-glutamine + H2O = L-glutamate + NH4(+). In Clostridium botulinum (strain 657 / Type Ba4), this protein is Glutaminase.